Here is a 103-residue protein sequence, read N- to C-terminus: Matrix Gla protein (103 aa).

The N-terminal stretch at 1 to 19 (MKSLLLLSILAALAVAALC) is a signal peptide. Glu-21 carries the post-translational modification 4-carboxyglutamate; partial. Phosphoserine is present on residues Ser-22, Ser-25, and Ser-28. Positions 51–97 (RAKAQERIRELNKPQYELNREACDDFKLCERYAMVYGYNAAYDRYFR) constitute a Gla domain. Glu-56, Glu-60, Glu-67, and Glu-71 each carry 4-carboxyglutamate. A disulfide bridge links Cys-73 with Cys-79. Residues 99-102 (RRGA) constitute a propeptide, removed in short form; probably by carboxypeptidase N. Residue Lys-103 is a propeptide, removed in long form; probably by carboxypeptidase H.

It belongs to the osteocalcin/matrix Gla protein family. Post-translationally, requires vitamin K-dependent gamma-carboxylation for its function.

The protein resides in the secreted. Functionally, associates with the organic matrix of bone and cartilage. Thought to act as an inhibitor of bone formation. The sequence is that of Matrix Gla protein (MGP) from Bos taurus (Bovine).